Here is a 100-residue protein sequence, read N- to C-terminus: Sec-independent protein translocase protein TatA (100 aa).

A helical membrane pass occupies residues M1 to G21. Residues K44–E55 show a composition bias toward basic and acidic residues. A disordered region spans residues K44–S100. The segment covering Q69–Y81 has biased composition (low complexity).

It belongs to the TatA/E family. The Tat system comprises two distinct complexes: a TatABC complex, containing multiple copies of TatA, TatB and TatC subunits, and a separate TatA complex, containing only TatA subunits. Substrates initially bind to the TatABC complex, which probably triggers association of the separate TatA complex to form the active translocon.

The protein localises to the cell membrane. In terms of biological role, part of the twin-arginine translocation (Tat) system that transports large folded proteins containing a characteristic twin-arginine motif in their signal peptide across membranes. TatA could form the protein-conducting channel of the Tat system. In Salinispora arenicola (strain CNS-205), this protein is Sec-independent protein translocase protein TatA.